The primary structure comprises 137 residues: Oleosin Ara h 11.0101 (137 aa).

Residue alanine 2 is modified to N-acetylalanine; alternate. 2 helical membrane passes run 27–47 (AVVA…GTVI) and 55–75 (LFVI…LLGL).

This sequence belongs to the oleosin family. Expressed in seeds (at protein level).

The protein localises to the lipid droplet. The protein resides in the membrane. Its function is as follows. May have a structural role to stabilize the lipid body during desiccation of the seed by preventing coalescence of the oil. Probably interacts with both lipid and phospholipid moieties of lipid bodies. May also provide recognition signals for specific lipase anchorage in lipolysis during seedling growth. The polypeptide is Oleosin Ara h 11.0101 (Arachis hypogaea (Peanut)).